The sequence spans 367 residues: FAD synthetase 2, chloroplastic (367 aa).

Residues 1–57 (MLCGGSRVLQHLSDHNHHNSIGLGLGFCGAKIVQLSSFFLRPSQAMAKSHHFSRKLR) constitute a chloroplast transit peptide.

Requires Mg(2+) as cofactor.

It localises to the plastid. The protein localises to the chloroplast. It carries out the reaction FMN + ATP + H(+) = FAD + diphosphate. It participates in cofactor biosynthesis; FAD biosynthesis; FAD from FMN: step 1/1. Catalyzes the adenylation of flavin mononucleotide (FMN) to form flavin adenine dinucleotide (FAD) coenzyme. The polypeptide is FAD synthetase 2, chloroplastic (Arabidopsis thaliana (Mouse-ear cress)).